The following is a 222-amino-acid chain: Deoxyribose-phosphate aldolase (222 aa).

Catalysis depends on aspartate 93, which acts as the Proton donor/acceptor. Residue lysine 156 is the Schiff-base intermediate with acetaldehyde of the active site. The active-site Proton donor/acceptor is the lysine 186.

It belongs to the DeoC/FbaB aldolase family. DeoC type 1 subfamily.

The protein resides in the cytoplasm. It catalyses the reaction 2-deoxy-D-ribose 5-phosphate = D-glyceraldehyde 3-phosphate + acetaldehyde. The protein operates within carbohydrate degradation; 2-deoxy-D-ribose 1-phosphate degradation; D-glyceraldehyde 3-phosphate and acetaldehyde from 2-deoxy-alpha-D-ribose 1-phosphate: step 2/2. Its function is as follows. Catalyzes a reversible aldol reaction between acetaldehyde and D-glyceraldehyde 3-phosphate to generate 2-deoxy-D-ribose 5-phosphate. The chain is Deoxyribose-phosphate aldolase from Corynebacterium glutamicum (strain ATCC 13032 / DSM 20300 / JCM 1318 / BCRC 11384 / CCUG 27702 / LMG 3730 / NBRC 12168 / NCIMB 10025 / NRRL B-2784 / 534).